The sequence spans 215 residues: Octanoyltransferase (215 aa).

Residues 31-206 enclose the BPL/LPL catalytic domain; sequence PESQDEVWLV…QLVRHLDYAE (176 aa). Residues 70-77, 137-139, and 150-152 contribute to the substrate site; these read RGGQVTYH, SLG, and GLA. The active-site Acyl-thioester intermediate is Cys168.

The protein belongs to the LipB family.

It is found in the cytoplasm. It catalyses the reaction octanoyl-[ACP] + L-lysyl-[protein] = N(6)-octanoyl-L-lysyl-[protein] + holo-[ACP] + H(+). It functions in the pathway protein modification; protein lipoylation via endogenous pathway; protein N(6)-(lipoyl)lysine from octanoyl-[acyl-carrier-protein]: step 1/2. In terms of biological role, catalyzes the transfer of endogenously produced octanoic acid from octanoyl-acyl-carrier-protein onto the lipoyl domains of lipoate-dependent enzymes. Lipoyl-ACP can also act as a substrate although octanoyl-ACP is likely to be the physiological substrate. The chain is Octanoyltransferase from Pseudomonas entomophila (strain L48).